Reading from the N-terminus, the 479-residue chain is Cardiolipin synthase A (479 aa).

Helical transmembrane passes span 8–28 and 38–58; these read IFGYLIALLHFLGLIAAIHAV and IAWALSLLFMPYLTLIPYLVF. PLD phosphodiesterase domains lie at 218–245 and 392–419; these read VNFRNHRKIVVVDGMLGFVGGHNVGDEY and QPGFLHQKVVLIDNEISAIGSANLDNRS. Catalysis depends on residues His-223, Lys-225, Asp-230, His-397, Lys-399, and Asp-404.

This sequence belongs to the phospholipase D family. Cardiolipin synthase subfamily. ClsA sub-subfamily.

The protein resides in the cell inner membrane. It carries out the reaction 2 a 1,2-diacyl-sn-glycero-3-phospho-(1'-sn-glycerol) = a cardiolipin + glycerol. Catalyzes the reversible phosphatidyl group transfer from one phosphatidylglycerol molecule to another to form cardiolipin (CL) (diphosphatidylglycerol) and glycerol. The sequence is that of Cardiolipin synthase A from Pseudomonas fluorescens (strain ATCC BAA-477 / NRRL B-23932 / Pf-5).